A 107-amino-acid chain; its full sequence is Death-associated protein-like 1 (107 aa).

The disordered stretch occupies residues 1–23 (MANEVQDLLSPRKGGHPPAVKAG).

Expressed in hair follicle (at protein level).

Its function is as follows. May play a role in the early stages of epithelial differentiation or in apoptosis. This is Death-associated protein-like 1 (DAPL1) from Homo sapiens (Human).